The chain runs to 314 residues: DNA-directed RNA polymerase subunit alpha (314 aa).

An alpha N-terminal domain (alpha-NTD) region spans residues 1 to 228; that stretch reads MIEIEKPVIE…EHLNIFVGLT (228 aa). Residues 245–314 are alpha C-terminal domain (alpha-CTD); it reads KEKVLEMTIE…ELGLGLRKEE (70 aa).

The protein belongs to the RNA polymerase alpha chain family. In terms of assembly, homodimer. The RNAP catalytic core consists of 2 alpha, 1 beta, 1 beta' and 1 omega subunit. When a sigma factor is associated with the core the holoenzyme is formed, which can initiate transcription.

It catalyses the reaction RNA(n) + a ribonucleoside 5'-triphosphate = RNA(n+1) + diphosphate. In terms of biological role, DNA-dependent RNA polymerase catalyzes the transcription of DNA into RNA using the four ribonucleoside triphosphates as substrates. This chain is DNA-directed RNA polymerase subunit alpha, found in Halalkalibacterium halodurans (strain ATCC BAA-125 / DSM 18197 / FERM 7344 / JCM 9153 / C-125) (Bacillus halodurans).